The primary structure comprises 298 residues: Olfactory receptor 5AK3 (298 aa).

Residues 1–25 are Extracellular-facing; sequence MGRGNSTEVTEFHLLGFGVQHEFQH. Residue Asn-5 is glycosylated (N-linked (GlcNAc...) asparagine). A helical transmembrane segment spans residues 26–46; that stretch reads VLFIVLLLIYVTSLIGNIGMI. Residues 47-54 are Cytoplasmic-facing; sequence LLIKTDSR. The helical transmembrane segment at 55 to 75 threads the bilayer; sequence LQTPMYFFPQHLAFVDICYTS. Residues 76–99 are Extracellular-facing; that stretch reads AITPKMLQSFTEENNLITFRGCVI. An intrachain disulfide couples Cys-97 to Cys-189. Residues 100-120 traverse the membrane as a helical segment; sequence QFLVYATFATSDCYLLAIMAM. The Cytoplasmic segment spans residues 121 to 133; that stretch reads DCYVAICKPLRYP. Residues 134–154 traverse the membrane as a helical segment; the sequence is MIMSQTVYIQLVAGSYIIGSI. N-linked (GlcNAc...) asparagine glycosylation occurs at Asn-155. At 155–196 the chain is on the extracellular side; it reads NASVHTGFTFSLSFCKSNKINHFFCDGLPILALSCSNIDINI. A helical membrane pass occupies residues 197–217; it reads ILDVVFVGFDLMFTELVIIFS. At 218-237 the chain is on the cytoplasmic side; the sequence is YIYIMVTILKMSSTAGRKKS. A helical transmembrane segment spans residues 238–258; it reads FSTCASHLTAVTIFYGTLSYM. At 259 to 271 the chain is on the extracellular side; it reads YLQPQSNNSQENM. An N-linked (GlcNAc...) asparagine glycan is attached at Asn-265. Residues 272-292 traverse the membrane as a helical segment; sequence KVASIFYGTVIPMLNPLIYSL. The Cytoplasmic segment spans residues 293–298; sequence RNKEGK.

It belongs to the G-protein coupled receptor 1 family.

It is found in the cell membrane. Functionally, odorant receptor. The polypeptide is Olfactory receptor 5AK3 (OR5AK3P) (Homo sapiens (Human)).